The chain runs to 1412 residues: Protein MODIFIER OF SNC1 1 (1412 aa).

Disordered stretches follow at residues 1-276 (MTSS…QSYP), 384-437 (GYGS…TQRP), 472-798 (QQMQ…KQKQ), 827-888 (NEGV…DESI), 909-1144 (DIKV…WNDG), and 1156-1412 (AEEM…GDRN). Over residues 56–103 (SWGSKSSLNAWGTSSLSPRTESGPGSPSHLSNRPSSGGSVTRPSTADS) the composition is skewed to polar residues. At Ser72 the chain carries Phosphoserine. Residues 109–119 (SSSSVAWDSNS) are compositionally biased toward low complexity. Polar residues predominate over residues 120–135 (RPSSASGVFPSNQPSV). 2 stretches are compositionally biased toward basic and acidic residues: residues 197–207 (AEKDTSEKSTR) and 236–267 (ANDR…EGQL). The span at 478-488 (RNERREIRNDA) shows a compositional bias: basic and acidic residues. 4 stretches are compositionally biased toward polar residues: residues 517 to 531 (KTRT…SSVV), 539 to 553 (QPRT…NKVS), 565 to 581 (SKNS…TNKN), and 610 to 639 (RIVN…TNTE). Residues 665 to 713 (DPKDNQRSTMRELARQRAQQRQKEEEERARDQRAKALAKLEELNRRSQI) are compositionally biased toward basic and acidic residues. Residues 667 to 717 (KDNQRSTMRELARQRAQQRQKEEEERARDQRAKALAKLEELNRRSQIYEEG) adopt a coiled-coil conformation. Polar residues-rich tracts occupy residues 738 to 749 (GSHSSNATNSVE), 756 to 779 (KNTT…QQDN), and 829 to 847 (GVSS…SAES). The segment covering 850 to 862 (PKRKNNRNGKKKH) has biased composition (basic residues). The span at 877 to 888 (VGKETKSGDESI) shows a compositional bias: basic and acidic residues. Ser883 bears the Phosphoserine mark. Polar residues-rich tracts occupy residues 914 to 938 (GDSS…NWKS) and 983 to 1003 (QTTV…QTSS). A compositionally biased stretch (basic and acidic residues) spans 1006-1023 (KRVEIERYVPKPIVKEMA). Positions 1056–1070 (LQPSGSTAGKSGSPS) are enriched in polar residues. Positions 1071-1084 (KSRHGNGRQGKHGR) are enriched in basic residues. The span at 1106 to 1137 (FVTSNQPIRGTVNYHSSKQTEQIAAKDQTTCN) shows a compositional bias: polar residues. Composition is skewed to basic and acidic residues over residues 1191–1202 (DPKKGNKRDFNK), 1222–1232 (KEGRVPGDHVW), and 1242–1251 (GGRESTRDKP). Composition is skewed to polar residues over residues 1266-1286 (GFTT…QNRS) and 1293-1307 (VEQN…NTGQ). 2 stretches are compositionally biased toward basic and acidic residues: residues 1338-1351 (SNRD…HYEY) and 1359-1369 (YDGERSREQSK). Positions 1384–1397 (QGQQRQGGYQQQRG) are enriched in low complexity. The span at 1400 to 1412 (GRNGGHGFTGDRN) shows a compositional bias: gly residues.

As to quaternary structure, interacts with TCP14 and TCP15.

Its function is as follows. Involved in the regulation of the chromatin structure and DNA methylation at the SNC1 locus. Regulates the expression of SNC1 at chromatin level. The protein is Protein MODIFIER OF SNC1 1 (MOS1) of Arabidopsis thaliana (Mouse-ear cress).